Here is a 91-residue protein sequence, read N- to C-terminus: Small ribosomal subunit protein bS20 (91 aa).

Belongs to the bacterial ribosomal protein bS20 family.

Binds directly to 16S ribosomal RNA. The chain is Small ribosomal subunit protein bS20 from Caulobacter sp. (strain K31).